The sequence spans 514 residues: 2,3-bisphosphoglycerate-independent phosphoglycerate mutase (514 aa).

The Mn(2+) site is built by aspartate 12 and serine 62. Serine 62 functions as the Phosphoserine intermediate in the catalytic mechanism. Substrate is bound by residues histidine 123, 153–154 (RD), arginine 185, arginine 191, 260–263 (RPDR), and lysine 335. Positions 402, 406, 443, 444, and 462 each coordinate Mn(2+).

It belongs to the BPG-independent phosphoglycerate mutase family. Monomer. Mn(2+) serves as cofactor.

The enzyme catalyses (2R)-2-phosphoglycerate = (2R)-3-phosphoglycerate. It participates in carbohydrate degradation; glycolysis; pyruvate from D-glyceraldehyde 3-phosphate: step 3/5. Its function is as follows. Catalyzes the interconversion of 2-phosphoglycerate and 3-phosphoglycerate. The protein is 2,3-bisphosphoglycerate-independent phosphoglycerate mutase of Lachnoclostridium phytofermentans (strain ATCC 700394 / DSM 18823 / ISDg) (Clostridium phytofermentans).